The chain runs to 116 residues: Large ribosomal subunit protein bL20 (116 aa).

This sequence belongs to the bacterial ribosomal protein bL20 family.

Functionally, binds directly to 23S ribosomal RNA and is necessary for the in vitro assembly process of the 50S ribosomal subunit. It is not involved in the protein synthesizing functions of that subunit. In Mycoplasmopsis agalactiae (strain NCTC 10123 / CIP 59.7 / PG2) (Mycoplasma agalactiae), this protein is Large ribosomal subunit protein bL20.